The chain runs to 396 residues: Probable arginine kinase F46H5.3 (396 aa).

The Phosphagen kinase N-terminal domain maps to 47–129 (KIEEGYAKLQ…FDPLIQDYHN (83 aa)). 102–106 (GVGVY) serves as a coordination point for substrate. The Phosphagen kinase C-terminal domain occupies 159 to 396 (FINSTRIRCG…AHLIALEKAA (238 aa)). ATP contacts are provided by residues 162–166 (STRIR) and histidine 226. Glutamate 266 serves as a coordination point for substrate. Arginine 270 contacts ATP. Cysteine 312 contacts substrate. ATP-binding positions include 321–325 (RASVH), 349–354 (RGIHGE), and aspartate 364. Glutamate 354 is a substrate binding site.

This sequence belongs to the ATP:guanido phosphotransferase family.

The catalysed reaction is L-arginine + ATP = N(omega)-phospho-L-arginine + ADP + H(+). In Caenorhabditis elegans, this protein is Probable arginine kinase F46H5.3.